A 621-amino-acid chain; its full sequence is DnaJ homolog subfamily C member 2 (621 aa).

Position 1 is an N-acetylmethionine (Met-1). A phosphoserine mark is found at Ser-47, Ser-49, Ser-60, and Ser-63. In terms of domain architecture, J spans 88–161 (DHYAVLGLGH…VKRRAFNSVD (74 aa)). A ZRF1-UBD region spans residues 160-250 (VDPTFDNSVP…RDERKWIEKQ (91 aa)). At Ser-183 the chain carries Phosphoserine. Disordered stretches follow at residues 287 to 312 (GKAK…KEKQ) and 426 to 453 (KEEA…GSKN). SANT domains follow at residues 449–511 (SGSK…KLDP) and 549–604 (IDSI…EMVK).

Component of ribosome-associated complex (RAC), a heterodimer composed of Hsp70/DnaK-type chaperone HSPA14 and Hsp40/DnaJ-type chaperone DNAJC2. Interacts (via ZRF1-UBD region) with ID1. In terms of processing, phosphorylated in M (mitotic) phase.

Its subcellular location is the nucleus. The protein resides in the cytoplasm. The protein localises to the cytosol. Functionally, acts both as a chaperone in the cytosol and as a chromatin regulator in the nucleus. When cytosolic, acts as a molecular chaperone: component of the ribosome-associated complex (RAC), a complex involved in folding or maintaining nascent polypeptides in a folding-competent state. In the RAC complex, stimulates the ATPase activity of the ribosome-associated pool of Hsp70-type chaperones HSPA14 that bind to the nascent polypeptide chain. When nuclear, mediates the switching from polycomb-repressed genes to an active state: specifically recruited at histone H2A ubiquitinated at 'Lys-119' (H2AK119ub), and promotes the displacement of the polycomb PRC1 complex from chromatin, thereby facilitating transcription activation. The polypeptide is DnaJ homolog subfamily C member 2 (Dnajc2) (Rattus norvegicus (Rat)).